A 356-amino-acid polypeptide reads, in one-letter code: Protein RecA (356 aa).

Position 69–76 (69–76 (GPESSGKT)) interacts with ATP.

The protein belongs to the RecA family.

The protein resides in the cytoplasm. In terms of biological role, can catalyze the hydrolysis of ATP in the presence of single-stranded DNA, the ATP-dependent uptake of single-stranded DNA by duplex DNA, and the ATP-dependent hybridization of homologous single-stranded DNAs. It interacts with LexA causing its activation and leading to its autocatalytic cleavage. This is Protein RecA from Gloeothece citriformis (strain PCC 7424) (Cyanothece sp. (strain PCC 7424)).